The chain runs to 300 residues: 33 kDa chaperonin (300 aa).

2 disulfides stabilise this stretch: Cys235/Cys237 and Cys269/Cys272.

The protein belongs to the HSP33 family. Post-translationally, under oxidizing conditions two disulfide bonds are formed involving the reactive cysteines. Under reducing conditions zinc is bound to the reactive cysteines and the protein is inactive.

It localises to the cytoplasm. Its function is as follows. Redox regulated molecular chaperone. Protects both thermally unfolding and oxidatively damaged proteins from irreversible aggregation. Plays an important role in the bacterial defense system toward oxidative stress. This is 33 kDa chaperonin from Pseudomonas fluorescens (strain Pf0-1).